Here is a 312-residue protein sequence, read N- to C-terminus: Thioredoxin reductase (312 aa).

FAD is bound at residue 33–43 (EGFFSGIAGGQ). Cysteine 138 and cysteine 141 are joined by a disulfide. 283-292 (DVQDKYYRQA) contacts FAD.

It belongs to the class-II pyridine nucleotide-disulfide oxidoreductase family. Homodimer. FAD is required as a cofactor.

Its subcellular location is the cytoplasm. It catalyses the reaction [thioredoxin]-dithiol + NADP(+) = [thioredoxin]-disulfide + NADPH + H(+). The polypeptide is Thioredoxin reductase (trxB) (Chlamydia trachomatis serovar D (strain ATCC VR-885 / DSM 19411 / UW-3/Cx)).